A 381-amino-acid chain; its full sequence is Opsin Rh2 (381 aa).

At 1-56 (MERSHLPETPFDLAHSGPRFQAQSSGNGSVLDNVLPDMAHLVNPYWSRFAPMDPMM) the chain is on the extracellular side. N27 is a glycosylation site (N-linked (GlcNAc...) asparagine). Residues 57 to 81 (SKILGLFTLAIMIISCCGNGVVVYI) form a helical membrane-spanning segment. At 82 to 93 (FGGTKSLRTPAN) the chain is on the cytoplasmic side. A helical membrane pass occupies residues 94 to 119 (LLVLNLAFSDFCMMASQSPVMIINFY). At 120-133 (YETWVLGPLWCDIY) the chain is on the extracellular side. Cysteines 130 and 207 form a disulfide. A helical transmembrane segment spans residues 134-153 (AGCGSLFGCVSIWSMCMIAF). Residues 154-172 (DRYNVIVKGINGTPMTIKT) lie on the Cytoplasmic side of the membrane. The helical transmembrane segment at 173–196 (SIMKILFIWMMAVFWTVMPLIGWS) threads the bilayer. The Extracellular segment spans residues 197–220 (AYVPEGNLTACSIDYMTRMWNPRS). Residues 221–248 (YLITYSLFVYYTPLFLICYSYWFIIAAV) form a helical membrane-spanning segment. Over 249–283 (AAHEKAMREQAKKMNVKSLRSSEDCDKSAEGKLAK) the chain is Cytoplasmic. A helical membrane pass occupies residues 284–307 (VALTTISLWFMAWTPYLVICYFGL). The Extracellular segment spans residues 308-314 (FKIDGLT). A helical transmembrane segment spans residues 315–339 (PLTTIWGATFAKTSAVYNPIVYGIS). K326 carries the N6-(retinylidene)lysine modification. Residues 340–381 (HPKYRIVLKEKCPMCVFGNTDEPKPDAPASDTETTSEADSKA) are Cytoplasmic-facing. The segment at 359-381 (TDEPKPDAPASDTETTSEADSKA) is disordered. Over residues 370–381 (DTETTSEADSKA) the composition is skewed to polar residues.

It belongs to the G-protein coupled receptor 1 family. Opsin subfamily. In terms of processing, phosphorylated on some or all of the serine and threonine residues present in the C-terminal region. In terms of tissue distribution, predominant opsin expressed in the dorsal ocelli.

The protein localises to the membrane. Visual pigments are the light-absorbing molecules that mediate vision. They consist of an apoprotein, opsin, covalently linked to cis-retinal. In Drosophila melanogaster (Fruit fly), this protein is Opsin Rh2 (Rh2).